Here is a 101-residue protein sequence, read N- to C-terminus: Urease subunit beta (101 aa).

It belongs to the urease beta subunit family. In terms of assembly, heterotrimer of UreA (gamma), UreB (beta) and UreC (alpha) subunits. Three heterotrimers associate to form the active enzyme.

It is found in the cytoplasm. The enzyme catalyses urea + 2 H2O + H(+) = hydrogencarbonate + 2 NH4(+). The protein operates within nitrogen metabolism; urea degradation; CO(2) and NH(3) from urea (urease route): step 1/1. The chain is Urease subunit beta from Ruegeria pomeroyi (strain ATCC 700808 / DSM 15171 / DSS-3) (Silicibacter pomeroyi).